A 360-amino-acid polypeptide reads, in one-letter code: Peptide chain release factor 1 (360 aa).

Glutamine 235 carries the post-translational modification N5-methylglutamine.

This sequence belongs to the prokaryotic/mitochondrial release factor family. In terms of processing, methylated by PrmC. Methylation increases the termination efficiency of RF1.

The protein resides in the cytoplasm. Functionally, peptide chain release factor 1 directs the termination of translation in response to the peptide chain termination codons UAG and UAA. The chain is Peptide chain release factor 1 from Leptothrix cholodnii (strain ATCC 51168 / LMG 8142 / SP-6) (Leptothrix discophora (strain SP-6)).